The chain runs to 441 residues: 3-phosphoshikimate 1-carboxyvinyltransferase (441 aa).

K25, S26, and R30 together coordinate 3-phosphoshikimate. K25 serves as a coordination point for phosphoenolpyruvate. Residues G97 and R125 each contribute to the phosphoenolpyruvate site. S169, Q170, D311, and K338 together coordinate 3-phosphoshikimate. Q170 serves as a coordination point for phosphoenolpyruvate. D311 functions as the Proton acceptor in the catalytic mechanism. Phosphoenolpyruvate is bound by residues R342, R383, and K410.

The protein belongs to the EPSP synthase family. As to quaternary structure, monomer.

The protein resides in the cytoplasm. It catalyses the reaction 3-phosphoshikimate + phosphoenolpyruvate = 5-O-(1-carboxyvinyl)-3-phosphoshikimate + phosphate. Its pathway is metabolic intermediate biosynthesis; chorismate biosynthesis; chorismate from D-erythrose 4-phosphate and phosphoenolpyruvate: step 6/7. Catalyzes the transfer of the enolpyruvyl moiety of phosphoenolpyruvate (PEP) to the 5-hydroxyl of shikimate-3-phosphate (S3P) to produce enolpyruvyl shikimate-3-phosphate and inorganic phosphate. This is 3-phosphoshikimate 1-carboxyvinyltransferase from Chlamydia muridarum (strain MoPn / Nigg).